Here is a 389-residue protein sequence, read N- to C-terminus: Phospho-N-acetylmuramoyl-pentapeptide-transferase (389 aa).

The next 11 membrane-spanning stretches (helical) occupy residues 21-41 (YITMRAVLACATALLIGLVAG), 71-91 (TPTMGGALILIAVAISTLLWA), 97-117 (FVWVVLLVTFGFGWIGWMDDY), 134-154 (FFWQATIGLVAAVYLAFAVSA), 167-187 (WVSSGFAMPLPTRADLIVPFF), 190-210 (VSYPLGVLGFVALTWAVIVGT), 222-242 (GLAIMPTVMVGSALGIFAYVV), 259-279 (AAELMVLCAAIAGAGLAFLWF), 286-306 (VFMGDVGALALGGALGTIAVI), 311-331 (IVLFIMGGVFVVETLSVMMQV), and 366-386 (QVVVRFWIISMMLVLIGLSTL).

The protein belongs to the glycosyltransferase 4 family. MraY subfamily. It depends on Mg(2+) as a cofactor.

The protein localises to the cell inner membrane. The catalysed reaction is UDP-N-acetyl-alpha-D-muramoyl-L-alanyl-gamma-D-glutamyl-meso-2,6-diaminopimeloyl-D-alanyl-D-alanine + di-trans,octa-cis-undecaprenyl phosphate = di-trans,octa-cis-undecaprenyl diphospho-N-acetyl-alpha-D-muramoyl-L-alanyl-D-glutamyl-meso-2,6-diaminopimeloyl-D-alanyl-D-alanine + UMP. The protein operates within cell wall biogenesis; peptidoglycan biosynthesis. Its function is as follows. Catalyzes the initial step of the lipid cycle reactions in the biosynthesis of the cell wall peptidoglycan: transfers peptidoglycan precursor phospho-MurNAc-pentapeptide from UDP-MurNAc-pentapeptide onto the lipid carrier undecaprenyl phosphate, yielding undecaprenyl-pyrophosphoryl-MurNAc-pentapeptide, known as lipid I. This Bordetella petrii (strain ATCC BAA-461 / DSM 12804 / CCUG 43448) protein is Phospho-N-acetylmuramoyl-pentapeptide-transferase.